A 379-amino-acid chain; its full sequence is Cobalt-precorrin-5B C(1)-methyltransferase (379 aa).

The protein belongs to the CbiD family.

It carries out the reaction Co-precorrin-5B + S-adenosyl-L-methionine = Co-precorrin-6A + S-adenosyl-L-homocysteine. It functions in the pathway cofactor biosynthesis; adenosylcobalamin biosynthesis; cob(II)yrinate a,c-diamide from sirohydrochlorin (anaerobic route): step 6/10. Catalyzes the methylation of C-1 in cobalt-precorrin-5B to form cobalt-precorrin-6A. The polypeptide is Cobalt-precorrin-5B C(1)-methyltransferase (Salmonella typhi).